We begin with the raw amino-acid sequence, 337 residues long: 1-aminocyclopropane-1-carboxylate deaminase (337 aa).

N6-(pyridoxal phosphate)lysine is present on K50. S77 functions as the Nucleophile in the catalytic mechanism.

Belongs to the ACC deaminase/D-cysteine desulfhydrase family. As to quaternary structure, homotrimer. It depends on pyridoxal 5'-phosphate as a cofactor.

The catalysed reaction is 1-aminocyclopropane-1-carboxylate + H2O = 2-oxobutanoate + NH4(+). Catalyzes a cyclopropane ring-opening reaction, the irreversible conversion of 1-aminocyclopropane-1-carboxylate (ACC) to ammonia and alpha-ketobutyrate. Allows growth on ACC as a nitrogen source. This Allorhizobium ampelinum (strain ATCC BAA-846 / DSM 112012 / S4) (Agrobacterium vitis (strain S4)) protein is 1-aminocyclopropane-1-carboxylate deaminase.